The chain runs to 283 residues: uncharacterized protein (283 aa).

The segment covering 1–10 (MEVNKTTESL) has biased composition (polar residues). Disordered regions lie at residues 1 to 96 (MEVN…SGGN) and 255 to 283 (DQEG…EAQI). Basic and acidic residues-rich tracts occupy residues 14–34 (KVEH…RDVK) and 44–81 (SKQE…VSSR).

It belongs to the chlamydial CPn_0705/CT_671/TC_0042 family.

This is an uncharacterized protein from Chlamydia muridarum (strain MoPn / Nigg).